The chain runs to 415 residues: MKSTVKKRGWVIAGIVVVALAALLYWRYAATEAPSGKAQHAGGRAAMRMGSAPAPVQAATARSEAVPRYLTGLGTITAANTVTVRSRVDGQLMAIHFKEGQQVKAGDLLAEIDPSQFKVALAQAQGQLAKDRATLANARRDLARYQQLGKTNLVSRQELDAQQALVSESEGTLKADEAAVASAQLQLDWSRITAPIDGRVGLKQVDIGNQISSGDTTGIVVLTQTHPIDLVFTLPESDIAAVMQAQKAGKPLTVEAWDRTNSTKLSTGELLSLDNQIDATTGTIKLKARFANEDDALFPNQFVNARMLIDTQQNAVVIPTAALQMGNEGHFVWVLNDDNKVSKHTVTTGIQNSESVVITAGLSAGDRVVTDGIDRLTEGAKVDVVEAQTAADAAKPERGERAPTDSARAAKGARS.

Positions 1–21 (MKSTVKKRGWVIAGIVVVALA) are cleaved as a signal peptide. The segment at 387-415 (AQTAADAAKPERGERAPTDSARAAKGARS) is disordered. Residues 394–403 (AKPERGERAP) show a composition bias toward basic and acidic residues.

Belongs to the membrane fusion protein (MFP) (TC 8.A.1) family. Part of a tripartite efflux system composed of MdtA, MdtB and MdtC.

It localises to the cell inner membrane. The sequence is that of Multidrug resistance protein MdtA from Cronobacter turicensis (strain DSM 18703 / CCUG 55852 / LMG 23827 / z3032).